The sequence spans 152 residues: Eukaryotic translation initiation factor 2 subunit 3 (152 aa).

Alanine 1 is modified (N-acetylalanine). 51-54 (NKID) contacts GTP.

This sequence belongs to the TRAFAC class translation factor GTPase superfamily. Classic translation factor GTPase family. EIF2G subfamily. Eukaryotic translation initiation factor 2 eIF2 is a heterotrimeric complex composed of an alpha (EIF2S1), a beta (EIF2S2) and a gamma (EIF2S3) chain. eIF2 is member of the 43S pre-initiation complex (43S PIC). Interacts (via C-terminus) with CDC123; the interaction is direct.

It localises to the cytoplasm. It is found in the cytosol. In terms of biological role, member of the eIF2 complex that functions in the early steps of protein synthesis by forming a ternary complex with GTP and initiator tRNA. This complex binds to a 40S ribosomal subunit, followed by mRNA binding to form the 43S pre-initiation complex (43S PIC). Junction of the 60S ribosomal subunit to form the 80S initiation complex is preceded by hydrolysis of the GTP bound to eIF2 and release of an eIF2-GDP binary complex. In order for eIF2 to recycle and catalyze another round of initiation, the GDP bound to eIF2 must exchange with GTP by way of a reaction catalyzed by eIF-2B. This Oryctolagus cuniculus (Rabbit) protein is Eukaryotic translation initiation factor 2 subunit 3 (EIF2S3).